The following is a 343-amino-acid chain: Ribosomal RNA small subunit methyltransferase, chloroplastic (343 aa).

The N-terminal 48 residues, 1–48 (MMNAVITSATINCNSLSPSWTCGDNSPSKLLLGEISAALSRRRTVKVS), are a transit peptide targeting the chloroplast. S-adenosyl-L-methionine-binding residues include histidine 78, methionine 80, glycine 105, glutamate 126, aspartate 151, and asparagine 183.

This sequence belongs to the class I-like SAM-binding methyltransferase superfamily. rRNA adenine N(6)-methyltransferase family.

It localises to the plastid. It is found in the chloroplast. Its function is as follows. Required for methylation of the 3' adenosines in the small subunit of plastid rRNA. Essential for chloroplast biogenesis at low temperatures. This Arabidopsis thaliana (Mouse-ear cress) protein is Ribosomal RNA small subunit methyltransferase, chloroplastic.